We begin with the raw amino-acid sequence, 465 residues long: UDP-N-acetylmuramoylalanine--D-glutamate ligase (465 aa).

127–133 contacts ATP; that stretch reads GSNGKST.

This sequence belongs to the MurCDEF family.

It localises to the cytoplasm. The catalysed reaction is UDP-N-acetyl-alpha-D-muramoyl-L-alanine + D-glutamate + ATP = UDP-N-acetyl-alpha-D-muramoyl-L-alanyl-D-glutamate + ADP + phosphate + H(+). It participates in cell wall biogenesis; peptidoglycan biosynthesis. Functionally, cell wall formation. Catalyzes the addition of glutamate to the nucleotide precursor UDP-N-acetylmuramoyl-L-alanine (UMA). This Cereibacter sphaeroides (strain KD131 / KCTC 12085) (Rhodobacter sphaeroides) protein is UDP-N-acetylmuramoylalanine--D-glutamate ligase.